A 285-amino-acid chain; its full sequence is Nucleotide-binding protein GSU1884 (285 aa).

8 to 15 (GLSGSGKS) provides a ligand contact to ATP. 59–62 (DIRG) is a binding site for GTP.

This sequence belongs to the RapZ-like family.

In terms of biological role, displays ATPase and GTPase activities. The polypeptide is Nucleotide-binding protein GSU1884 (Geobacter sulfurreducens (strain ATCC 51573 / DSM 12127 / PCA)).